A 300-amino-acid chain; its full sequence is Cation-efflux pump FieF (300 aa).

Helical transmembrane passes span 12 to 32 (AAIA…FAWW), 39 to 59 (ILAA…NLLV), 82 to 102 (AALA…LTGI), 114 to 134 (PGVG…LVSF), 151 to 171 (MLHY…LALS), and 172 to 192 (WYGW…YILY). 2 residues coordinate Zn(2+): Asp45 and Asp49. 2 residues coordinate Zn(2+): His153 and Asp157.

Belongs to the cation diffusion facilitator (CDF) transporter (TC 2.A.4) family. FieF subfamily. Homodimer.

The protein resides in the cell inner membrane. The catalysed reaction is Zn(2+)(in) + H(+)(out) = Zn(2+)(out) + H(+)(in). It catalyses the reaction Cd(2+)(in) + H(+)(out) = Cd(2+)(out) + H(+)(in). The enzyme catalyses Fe(2+)(in) + H(+)(out) = Fe(2+)(out) + H(+)(in). Functionally, divalent metal cation transporter which exports Zn(2+), Cd(2+) and possibly Fe(2+). May be involved in zinc and iron detoxification by efflux. This chain is Cation-efflux pump FieF, found in Escherichia fergusonii (strain ATCC 35469 / DSM 13698 / CCUG 18766 / IAM 14443 / JCM 21226 / LMG 7866 / NBRC 102419 / NCTC 12128 / CDC 0568-73).